A 1553-amino-acid chain; its full sequence is Mediator of RNA polymerase II transcription subunit 14 (1553 aa).

2 consecutive short sequence motifs (LXXLL motif) follow at residues 55–59 (LAELL) and 472–476 (LPALL). Ser615 carries the phosphoserine modification. Disordered stretches follow at residues 699-723 (FATQ…GTSG), 1006-1199 (ASHE…LNRP), and 1513-1553 (GVGS…GGPQ). A Phosphoserine modification is found at Ser1015. Composition is skewed to low complexity over residues 1024–1039 (GGPS…GSSP) and 1065–1080 (PSSS…HPSA). Over residues 1081 to 1090 (GAGGGSGPQG) the composition is skewed to gly residues. A compositionally biased stretch (pro residues) spans 1099 to 1108 (PPAPHMPHPS). A compositionally biased stretch (polar residues) spans 1131–1155 (GPNTLYMQSHQDSPFTAMSPANNNW). Pro residues predominate over residues 1159 to 1169 (PSMPRPSPRPG). Residues 1177 to 1193 (TGGGAGVAGGTDRGGSR) are compositionally biased toward gly residues. A compositionally biased stretch (low complexity) spans 1515 to 1534 (GSSPNPMMPMQQLPQQVGPQ).

It belongs to the Mediator complex subunit 14 family. As to quaternary structure, component of the Mediator complex, which may include CDK8, MED4, MED6, MED11, MED14, MED17, MED18, MED20, MED21, MED22, MED27, MED28, MED30 and MED31.

It is found in the nucleus. In terms of biological role, component of the Mediator complex, a coactivator involved in the regulated transcription of nearly all RNA polymerase II-dependent genes. Mediator functions as a bridge to convey information from gene-specific regulatory proteins to the basal RNA polymerase II transcription machinery. Mediator is recruited to promoters by direct interactions with regulatory proteins and serves as a scaffold for the assembly of a functional pre-initiation complex with RNA polymerase II and the general transcription factors. Required for activated transcription of the MtnA, MtnB and MtnD genes. The chain is Mediator of RNA polymerase II transcription subunit 14 (MED14) from Drosophila melanogaster (Fruit fly).